The sequence spans 415 residues: Gamma-glutamyl phosphate reductase (415 aa).

This sequence belongs to the gamma-glutamyl phosphate reductase family.

It is found in the cytoplasm. It carries out the reaction L-glutamate 5-semialdehyde + phosphate + NADP(+) = L-glutamyl 5-phosphate + NADPH + H(+). Its pathway is amino-acid biosynthesis; L-proline biosynthesis; L-glutamate 5-semialdehyde from L-glutamate: step 2/2. Its function is as follows. Catalyzes the NADPH-dependent reduction of L-glutamate 5-phosphate into L-glutamate 5-semialdehyde and phosphate. The product spontaneously undergoes cyclization to form 1-pyrroline-5-carboxylate. This Bacillus cereus (strain ZK / E33L) protein is Gamma-glutamyl phosphate reductase.